We begin with the raw amino-acid sequence, 316 residues long: Beta-ketoacyl-[acyl-carrier-protein] synthase III 1 (316 aa).

Catalysis depends on residues Cys-112 and His-243. The segment at 244 to 248 is ACP-binding; sequence QANYR. Asn-273 is a catalytic residue.

The protein belongs to the thiolase-like superfamily. FabH family. As to quaternary structure, homodimer.

The protein localises to the cytoplasm. The catalysed reaction is malonyl-[ACP] + acetyl-CoA + H(+) = 3-oxobutanoyl-[ACP] + CO2 + CoA. It functions in the pathway lipid metabolism; fatty acid biosynthesis. Its function is as follows. Catalyzes the condensation reaction of fatty acid synthesis by the addition to an acyl acceptor of two carbons from malonyl-ACP. Catalyzes the first condensation reaction which initiates fatty acid synthesis and may therefore play a role in governing the total rate of fatty acid production. Possesses both acetoacetyl-ACP synthase and acetyl transacylase activities. Its substrate specificity determines the biosynthesis of branched-chain and/or straight-chain of fatty acids. This is Beta-ketoacyl-[acyl-carrier-protein] synthase III 1 from Vibrio vulnificus (strain CMCP6).